The following is a 205-amino-acid chain: GTP cyclohydrolase 1 (205 aa).

The Zn(2+) site is built by Cys-95, His-98, and Cys-166.

This sequence belongs to the GTP cyclohydrolase I family. Toroid-shaped homodecamer, composed of two pentamers of five dimers.

It carries out the reaction GTP + H2O = 7,8-dihydroneopterin 3'-triphosphate + formate + H(+). The protein operates within cofactor biosynthesis; 7,8-dihydroneopterin triphosphate biosynthesis; 7,8-dihydroneopterin triphosphate from GTP: step 1/1. The chain is GTP cyclohydrolase 1 from Maricaulis maris (strain MCS10) (Caulobacter maris).